Reading from the N-terminus, the 1456-residue chain is RNA replication protein (1456 aa).

An Alphavirus-like MT domain is found at 59–225 (NPYSIELHTH…HEFSHLQSVK (167 aa)). Disordered stretches follow at residues 474–500 (DLAG…KKEY) and 512–571 (TRKH…GAGT). Basic and acidic residues predominate over residues 491-500 (REPEGDKKEY). Residues 512-528 (TRKHNRETKSRAAKKAK) show a composition bias toward basic residues. Residues 529–541 (RLAEIQDSINRDQ) show a composition bias toward basic and acidic residues. Residues 695–862 (DVKNKRIGAI…VFAKYCRYYL (168 aa)) form the (+)RNA virus helicase ATP-binding domain. Residue 735–742 (GAGGSGKS) participates in ATP binding. The (+)RNA virus helicase C-terminal domain maps to 863–997 (NATHRNKKDL…VVREQALREY (135 aa)). One can recognise a RdRp catalytic domain in the interval 1236-1343 (RPSLANDYTA…DCVPEIKQSF (108 aa)).

Belongs to the potexvirus/carlavirus RNA replication protein family.

The catalysed reaction is RNA(n) + a ribonucleoside 5'-triphosphate = RNA(n+1) + diphosphate. It carries out the reaction ATP + H2O = ADP + phosphate + H(+). Functionally, RNA replication. The central part of this protein possibly functions as an ATP-binding helicase. The polypeptide is RNA replication protein (Potato virus X (strain HB) (PVX)).